Here is a 308-residue protein sequence, read N- to C-terminus: Putative gluconeogenesis factor (308 aa).

It belongs to the gluconeogenesis factor family.

It localises to the cytoplasm. Required for morphogenesis under gluconeogenic growth conditions. The chain is Putative gluconeogenesis factor from Pasteurella multocida (strain Pm70).